Consider the following 596-residue polypeptide: Putative terpene synthase 2, chloroplastic (596 aa).

The transit peptide at 1-46 (MATLSMQVSTLSKQVKNLNTFGMGSASKLPMVARRVSTTRLRPICS) directs the protein to the chloroplast. 2 residues coordinate Mn(2+): Asp349 and Asp353. Residues 349 to 353 (DDVYD) carry the DDXXD motif motif. 2 homodimerization regions span residues 355 to 361 (YGTLDEL) and 427 to 464 (EAKW…FTLP). Mn(2+) is bound by residues Asp493 and Glu501.

Belongs to the terpene synthase family. As to quaternary structure, homodimer. Mn(2+) serves as cofactor. The cofactor is Mg(2+).

The protein resides in the plastid. It localises to the chloroplast. It functions in the pathway secondary metabolite biosynthesis; terpenoid biosynthesis. Its function is as follows. Putative monoterpene synthase inactive on geranyl diphosphate (GPP). This Thymus vulgaris (Thyme) protein is Putative terpene synthase 2, chloroplastic.